The primary structure comprises 39 residues: Photosystem II reaction center protein L (39 aa).

Residues 18–38 form a helical membrane-spanning segment; the sequence is SLYLGLLFVFVTGVLMSSYFF.

This sequence belongs to the PsbL family. PSII is composed of 1 copy each of membrane proteins PsbA, PsbB, PsbC, PsbD, PsbE, PsbF, PsbH, PsbI, PsbJ, PsbK, PsbL, PsbM, PsbT, PsbX, PsbY, PsbZ, Psb30/Ycf12, peripheral proteins PsbO, CyanoQ (PsbQ), PsbU, PsbV and a large number of cofactors. It forms dimeric complexes.

The protein resides in the cellular thylakoid membrane. In terms of biological role, one of the components of the core complex of photosystem II (PSII). PSII is a light-driven water:plastoquinone oxidoreductase that uses light energy to abstract electrons from H(2)O, generating O(2) and a proton gradient subsequently used for ATP formation. It consists of a core antenna complex that captures photons, and an electron transfer chain that converts photonic excitation into a charge separation. This subunit is found at the monomer-monomer interface and is required for correct PSII assembly and/or dimerization. The protein is Photosystem II reaction center protein L of Parasynechococcus marenigrum (strain WH8102).